We begin with the raw amino-acid sequence, 188 residues long: Peptidyl-tRNA hydrolase (188 aa).

Tyrosine 14 is a tRNA binding site. The active-site Proton acceptor is the histidine 19. TRNA is bound by residues phenylalanine 64, asparagine 66, and asparagine 112.

Belongs to the PTH family. Monomer.

The protein localises to the cytoplasm. The enzyme catalyses an N-acyl-L-alpha-aminoacyl-tRNA + H2O = an N-acyl-L-amino acid + a tRNA + H(+). In terms of biological role, hydrolyzes ribosome-free peptidyl-tRNAs (with 1 or more amino acids incorporated), which drop off the ribosome during protein synthesis, or as a result of ribosome stalling. Catalyzes the release of premature peptidyl moieties from peptidyl-tRNA molecules trapped in stalled 50S ribosomal subunits, and thus maintains levels of free tRNAs and 50S ribosomes. This chain is Peptidyl-tRNA hydrolase, found in Enterococcus faecalis (strain ATCC 700802 / V583).